Reading from the N-terminus, the 129-residue chain is L5 homolog (129 aa).

Residues 27–47 (YFYILVFEVIVALIILNFFFK) form a helical; Signal-anchor for type III membrane protein membrane-spanning segment. Cysteine 76 and cysteine 106 are joined by a disulfide.

The protein belongs to the chordopoxvirinae L5 family. Part of a stable entry-fusion complex (EFC) which is at least composed of proteins A16, A21, A28, G3, G9, H2, J5, and L5. Formation of the viral membrane is necessary for the assembly of the complex. Interacts with G3. In terms of processing, most cysteines are linked by disulfide bonds. They are created by the viral disulfide bond formation pathway, a poxvirus-specific redox pathway that operates on the cytoplasmic side of the MV membranes.

The protein localises to the virion membrane. Its function is as follows. Envelope protein part of the entry-fusion complex responsible for the virus membrane fusion with host cell membrane during virus entry. Also plays a role in cell-cell fusion (syncytium formation). This chain is L5 homolog, found in Fowlpox virus (strain NVSL) (FPV).